The chain runs to 331 residues: Mucin-15 (331 aa).

The N-terminal stretch at 1 to 22 (MLTLAKIALISSLFISLPFARP) is a signal peptide. Residues 23–233 (QKQNPRRNVT…SDTPKENKNT (211 aa)) lie on the Extracellular side of the membrane. N-linked (GlcNAc...) asparagine glycosylation is found at Asn30, Asn44, Asn54, Asn59, Asn75, Asn84, Asn120, Asn136, Asn145, Asn152, Asn215, and Asn222. Residues 124 to 162 (ADANPLQVSEHSNSTNSPSPENFTWSLDNDTMNSPEDIS) show a composition bias toward polar residues. A disordered region spans residues 124-186 (ADANPLQVSE…VTPFTAEPTE (63 aa)). The helical transmembrane segment at 234-254 (GIVFGAILGAILGASLLSLVG) threads the bilayer. Residues 255–331 (YLLCGQRKTD…DAIPPLRPSI (77 aa)) lie on the Cytoplasmic side of the membrane. The tract at residues 302-331 (AVSDSSMPEGGESLQDGIPMDAIPPLRPSI) is disordered.

Highly glycosylated (N- and O-linked carbohydrates).

Its subcellular location is the membrane. In Mus musculus (Mouse), this protein is Mucin-15 (Muc15).